A 681-amino-acid polypeptide reads, in one-letter code: Calpain-C (681 aa).

In terms of domain architecture, Calpain catalytic spans leucine 18–aspartate 331. The domain III stretch occupies residues threonine 332–serine 481. The tract at residues cysteine 482 to cysteine 514 is linker. The interval glutamine 515–cysteine 681 is domain IV. In terms of domain architecture, EF-hand spans alanine 552–tryptophan 587. Positions 565, 567, 569, and 571 each coordinate Ca(2+).

It belongs to the peptidase C2 family. In terms of tissue distribution, localized to the salivary glands in the larva.

Its subcellular location is the cytoplasm. Functionally, not known; does not seem to have protease activity. The protein is Calpain-C of Drosophila melanogaster (Fruit fly).